The chain runs to 320 residues: MAQVLRGTVTDFPGFDERADAETLRKAMKGLGTDEESILTLLTSRSNAQRQEISAAFKTLFGRDLLDDLKSELTGKFEKLIVALMKPSRLYDAYELKHALKGAGTDEKVLTEIIASRTPEELRAIKEVYEEEYGSSLEDDVVGDTSGYYQRMLVVLLQANRDPDAGIDEAQVEQDAQALFQAGELKWGTDEEKFITIFGTRSVSHLRKVFDKYMTISGFQIEETIDRETSGNLEQLLLAVVKSIRSIPAYLAETLYYAMKGAGTDDHTLIRVMVSRSEIDLLNIRKEFRKNFATSLYSMIKGDTSGDYKKALLLLCGGED.

N-acetylalanine is present on Ala2. Annexin repeat units lie at residues 15–86, 87–158, 170–242, and 246–317; these read FDER…ALMK, PSRL…VLLQ, AQVE…AVVK, and SIPA…LLCG. A Glycyl lysine isopeptide (Lys-Gly) (interchain with G-Cter in SUMO1); alternate cross-link involves residue Lys29. Lys29 is covalently cross-linked (Glycyl lysine isopeptide (Lys-Gly) (interchain with G-Cter in SUMO2); alternate). Ser37 is modified (phosphoserine). 5 positions are modified to N6-acetyllysine: Lys70, Lys76, Lys79, Lys97, and Lys101. Lys290 carries the post-translational modification N6-succinyllysine. The [IL]-x-C-x-x-[DE] motif motif lies at 314 to 320; it reads LLCGGED.

The protein belongs to the annexin family. As to quaternary structure, monomer. Binds ATRX and EIF5B. In terms of processing, S-nitrosylation is induced by interferon-gamma and oxidatively-modified low-densitity lipoprotein (LDL(ox)) possibly implicating the iNOS-S100A8/9 transnitrosylase complex.

In terms of biological role, this protein is an anticoagulant protein that acts as an indirect inhibitor of the thromboplastin-specific complex, which is involved in the blood coagulation cascade. The sequence is that of Annexin A5 (ANXA5) from Macaca fascicularis (Crab-eating macaque).